A 668-amino-acid chain; its full sequence is tRNA 5-methylaminomethyl-2-thiouridine biosynthesis bifunctional protein MnmC (668 aa).

A tRNA (mnm(5)s(2)U34)-methyltransferase region spans residues 1–245 (MKHYSIQPAN…KREMLCGVME (245 aa)). The FAD-dependent cmnm(5)s(2)U34 oxidoreductase stretch occupies residues 270–668 (IGGGIASALL…LLKGKAVKAG (399 aa)).

This sequence in the N-terminal section; belongs to the methyltransferase superfamily. tRNA (mnm(5)s(2)U34)-methyltransferase family. It in the C-terminal section; belongs to the DAO family. Requires FAD as cofactor.

Its subcellular location is the cytoplasm. The enzyme catalyses 5-aminomethyl-2-thiouridine(34) in tRNA + S-adenosyl-L-methionine = 5-methylaminomethyl-2-thiouridine(34) in tRNA + S-adenosyl-L-homocysteine + H(+). Functionally, catalyzes the last two steps in the biosynthesis of 5-methylaminomethyl-2-thiouridine (mnm(5)s(2)U) at the wobble position (U34) in tRNA. Catalyzes the FAD-dependent demodification of cmnm(5)s(2)U34 to nm(5)s(2)U34, followed by the transfer of a methyl group from S-adenosyl-L-methionine to nm(5)s(2)U34, to form mnm(5)s(2)U34. This chain is tRNA 5-methylaminomethyl-2-thiouridine biosynthesis bifunctional protein MnmC, found in Escherichia coli (strain K12 / DH10B).